The following is a 139-amino-acid chain: Nucleoside diphosphate kinase (139 aa).

ATP is bound by residues Lys-11, Phe-59, Arg-87, Thr-93, Arg-104, and Asn-114. Catalysis depends on His-117, which acts as the Pros-phosphohistidine intermediate.

Belongs to the NDK family. As to quaternary structure, homotetramer. Requires Mg(2+) as cofactor.

It is found in the cytoplasm. It catalyses the reaction a 2'-deoxyribonucleoside 5'-diphosphate + ATP = a 2'-deoxyribonucleoside 5'-triphosphate + ADP. The enzyme catalyses a ribonucleoside 5'-diphosphate + ATP = a ribonucleoside 5'-triphosphate + ADP. Major role in the synthesis of nucleoside triphosphates other than ATP. The ATP gamma phosphate is transferred to the NDP beta phosphate via a ping-pong mechanism, using a phosphorylated active-site intermediate. The protein is Nucleoside diphosphate kinase of Wolbachia sp. subsp. Drosophila simulans (strain wRi).